Here is a 365-residue protein sequence, read N- to C-terminus: Palmitoyltransferase ZDHHC20 (365 aa).

Residues 1-14 (MAPWTLWRCCQRVV) are Cytoplasmic-facing. The helical transmembrane segment at 15-35 (GWVPVLFITFVVVWSYYAYVV) threads the bilayer. Residues 36-53 (ELCVFTIFGNEENGKTVV) lie on the Lumenal side of the membrane. Residues 54-74 (YLVAFHLFFVMFVWSYWMTIF) traverse the membrane as a helical segment. The Cytoplasmic portion of the chain corresponds to 75-169 (TSPASPSKEF…NNCVGFSNYK (95 aa)). The 51-residue stretch at 126 to 176 (RYCEKCQLIKPDRAHHCSACDSCILKMDHHCPWVNNCVGFSNYKFFLLFLL) folds into the DHHC domain. Positions 128 and 131 each coordinate Zn(2+). Residues lysine 135 and 140-143 (HHCS) each bind substrate. 5 residues coordinate Zn(2+): histidine 141, cysteine 142, cysteine 145, cysteine 148, and histidine 155. Cysteine 156 acts as the S-palmitoyl cysteine intermediate in catalysis. Cysteine 162 is a Zn(2+) binding site. A helical transmembrane segment spans residues 170–190 (FFLLFLLYSLLYCLFVAATVL). Topologically, residues 191-207 (EYFIKFWTNELTDTRAK) are lumenal. A helical membrane pass occupies residues 208-231 (FHVLFLFFVSAMFFISVLSLFSYH). Residues 232-365 (CWLVGKNRTT…NNHVTVAIEN (134 aa)) are Cytoplasmic-facing. Phosphoserine is present on residues serine 305, serine 330, and serine 339.

It belongs to the DHHC palmitoyltransferase family. In terms of processing, autopalmitoylated (in vitro).

The protein resides in the golgi apparatus membrane. It localises to the cell membrane. Its subcellular location is the cytoplasm. The protein localises to the perinuclear region. It is found in the endoplasmic reticulum membrane. The protein resides in the endoplasmic reticulum-Golgi intermediate compartment membrane. The catalysed reaction is L-cysteinyl-[protein] + hexadecanoyl-CoA = S-hexadecanoyl-L-cysteinyl-[protein] + CoA. It catalyses the reaction L-cysteinyl-[protein] + tetradecanoyl-CoA = S-tetradecanoyl-L-cysteinyl-[protein] + CoA. It carries out the reaction L-cysteinyl-[protein] + octadecanoyl-CoA = S-octadecanoyl-L-cysteinyl-[protein] + CoA. Functionally, palmitoyltransferase that could catalyze the addition of palmitate onto various protein substrates. Catalyzes palmitoylation of Cys residues in the cytoplasmic C-terminus of EGFR, and modulates the duration of EGFR signaling by modulating palmitoylation-dependent EGFR internalization and degradation. Has a preference for acyl-CoA with C16 fatty acid chains. Can also utilize acyl-CoA with C14 and C18 fatty acid chains. May palmitoylate CALHM1 subunit of gustatory voltage-gated ion channels and modulate channel gating and kinetics. In terms of biological role, (Microbial infection) Dominant palmitoyltransferase responsible for lipidation of SARS coronavirus-2/SARS-CoV-2 spike protein. Through a sequential action with ZDHHC9, rapidly and efficiently palmitoylates spike protein following its synthesis in the endoplasmic reticulum (ER). In the infected cell, promotes spike biogenesis by protecting it from premature ER degradation, increases half-life and controls the lipid organization of its immediate membrane environment. Once the virus has formed, spike palmitoylation controls fusion with the target cell. The protein is Palmitoyltransferase ZDHHC20 of Homo sapiens (Human).